A 134-amino-acid polypeptide reads, in one-letter code: Large ribosomal subunit protein bL17 (134 aa).

It belongs to the bacterial ribosomal protein bL17 family. In terms of assembly, part of the 50S ribosomal subunit. Contacts protein L32.

This chain is Large ribosomal subunit protein bL17, found in Anaplasma marginale (strain Florida).